The following is a 263-amino-acid chain: Acyl-[acyl-carrier-protein]--UDP-N-acetylglucosamine O-acyltransferase (263 aa).

Belongs to the transferase hexapeptide repeat family. LpxA subfamily. In terms of assembly, homotrimer.

It is found in the cytoplasm. The enzyme catalyses a (3R)-hydroxyacyl-[ACP] + UDP-N-acetyl-alpha-D-glucosamine = a UDP-3-O-[(3R)-3-hydroxyacyl]-N-acetyl-alpha-D-glucosamine + holo-[ACP]. It participates in glycolipid biosynthesis; lipid IV(A) biosynthesis; lipid IV(A) from (3R)-3-hydroxytetradecanoyl-[acyl-carrier-protein] and UDP-N-acetyl-alpha-D-glucosamine: step 1/6. In terms of biological role, involved in the biosynthesis of lipid A, a phosphorylated glycolipid that anchors the lipopolysaccharide to the outer membrane of the cell. In Campylobacter jejuni subsp. jejuni serotype O:2 (strain ATCC 700819 / NCTC 11168), this protein is Acyl-[acyl-carrier-protein]--UDP-N-acetylglucosamine O-acyltransferase.